We begin with the raw amino-acid sequence, 92 residues long: Small ribosomal subunit protein uS15c (92 aa).

This sequence belongs to the universal ribosomal protein uS15 family. In terms of assembly, part of the 30S ribosomal subunit.

The protein resides in the plastid. The protein localises to the chloroplast. This chain is Small ribosomal subunit protein uS15c (rps15-A), found in Lemna minor (Common duckweed).